The primary structure comprises 1267 residues: Probable cation-transporting ATPase catp-6 (1267 aa).

Over methionine 1–arginine 32 the chain is Extracellular. Residues threonine 33–tryptophan 53 traverse the membrane as a helical segment. The Cytoplasmic segment spans residues lysine 54–proline 189. A helical membrane pass occupies residues isoleucine 190–valine 210. The Extracellular portion of the chain corresponds to threonine 211–glutamate 217. Residues tyrosine 218–tyrosine 238 traverse the membrane as a helical segment. Residues glutamine 239 to lysine 390 lie on the Cytoplasmic side of the membrane. A helical transmembrane segment spans residues phenylalanine 391 to isoleucine 411. Residues methionine 412–serine 424 lie on the Extracellular side of the membrane. The helical transmembrane segment at leucine 425 to isoleucine 445 threads the bilayer. The Cytoplasmic portion of the chain corresponds to asparagine 446–methionine 950. Catalysis depends on aspartate 476, which acts as the 4-aspartylphosphate intermediate. Mg(2+) is bound by residues aspartate 891 and aspartate 895. A helical transmembrane segment spans residues alanine 951 to leucine 971. The Extracellular segment spans residues threonine 972–phenylalanine 976. Residues methionine 977–phenylalanine 997 form a helical membrane-spanning segment. Residues tyrosine 998–alanine 1013 lie on the Cytoplasmic side of the membrane. Residues serine 1014–phenylalanine 1034 traverse the membrane as a helical segment. The Extracellular segment spans residues serine 1035–serine 1058. A helical membrane pass occupies residues methionine 1059–tyrosine 1079. Topologically, residues serine 1080–alanine 1097 are cytoplasmic. The helical transmembrane segment at leucine 1098–leucine 1118 threads the bilayer. Residues lysine 1119 to arginine 1132 are Extracellular-facing. Residues isoleucine 1133–phenylalanine 1153 form a helical membrane-spanning segment. The Cytoplasmic portion of the chain corresponds to valine 1154–tyrosine 1267. The interval glutamate 1232 to glutamate 1256 is disordered.

The protein belongs to the cation transport ATPase (P-type) (TC 3.A.3) family. Type V subfamily.

The protein localises to the membrane. It carries out the reaction ATP + H2O = ADP + phosphate + H(+). This is Probable cation-transporting ATPase catp-6 from Caenorhabditis elegans.